A 64-amino-acid polypeptide reads, in one-letter code: Large ribosomal subunit protein bL35 (64 aa).

The protein belongs to the bacterial ribosomal protein bL35 family.

In Ureaplasma urealyticum serovar 10 (strain ATCC 33699 / Western), this protein is Large ribosomal subunit protein bL35.